We begin with the raw amino-acid sequence, 424 residues long: UPF0597 protein SO_1403 (424 aa).

It belongs to the UPF0597 family.

In Shewanella oneidensis (strain ATCC 700550 / JCM 31522 / CIP 106686 / LMG 19005 / NCIMB 14063 / MR-1), this protein is UPF0597 protein SO_1403.